The sequence spans 1085 residues: Phosphorylase b kinase regulatory subunit beta (1085 aa).

Phosphoserine is present on residues S10, S19, and S693. 2 calmodulin-binding regions span residues 760 to 787 (RVYR…VVDS) and 912 to 943 (SGRC…ILER). C1082 carries the S-farnesyl cysteine lipid modification.

This sequence belongs to the phosphorylase b kinase regulatory chain family. As to quaternary structure, hexadecamer of 4 heterotetramers, each composed of alpha, beta, gamma, and delta subunits. Alpha (PHKA1 or PHKA2) and beta (PHKB) are regulatory subunits, gamma (PHKG1 or PHKG2) is the catalytic subunit, and delta is calmodulin. Although the final Cys may be farnesylated, the terminal tripeptide is probably not removed, and the C-terminus is not methylated.

The protein localises to the cell membrane. Its pathway is glycan biosynthesis; glycogen metabolism. Its activity is regulated as follows. By phosphorylation of various serine residues. Its function is as follows. Phosphorylase b kinase catalyzes the phosphorylation of serine in certain substrates, including troponin I. The beta chain acts as a regulatory unit and modulates the activity of the holoenzyme in response to phosphorylation. The protein is Phosphorylase b kinase regulatory subunit beta (Phkb) of Mus musculus (Mouse).